Consider the following 194-residue polypeptide: Probable RNA 2'-phosphotransferase (194 aa).

Belongs to the KptA/TPT1 family.

Removes the 2'-phosphate from RNA via an intermediate in which the phosphate is ADP-ribosylated by NAD followed by a presumed transesterification to release the RNA and generate ADP-ribose 1''-2''-cyclic phosphate (APPR&gt;P). May function as an ADP-ribosylase. The sequence is that of Probable RNA 2'-phosphotransferase from Escherichia coli O45:K1 (strain S88 / ExPEC).